Consider the following 523-residue polypeptide: Calcium-dependent protein kinase 34 (523 aa).

The tract at residues 1–60 (MGNCCSHGRDSDDNKEEPRPENGGGGVGAAEASVRASKHPPASPPPATKQGPIGPVLGRP) is disordered. A lipid anchor (N-myristoyl glycine) is attached at Gly2. Residues 7-20 (HGRDSDDNKEEPRP) show a composition bias toward basic and acidic residues. The 259-residue stretch at 68 to 326 (YTLGKELGRG…AAQVLNHPWI (259 aa)) folds into the Protein kinase domain. ATP contacts are provided by residues 74–82 (LGRGQFGVT) and Lys97. Asp192 (proton acceptor) is an active-site residue. Ser232 is subject to Phosphoserine. The interval 332–362 (APDVPLDNAVMSRLKQFKAMNNFKKVALRVI) is autoinhibitory domain. EF-hand domains lie at 369–404 (EEIM…QGTR), 405–440 (LSEY…INRL), 441–476 (DREE…FGMN), and 480–511 (DIKE…GNPD). 20 residues coordinate Ca(2+): Asp382, Asp384, Ser386, Thr388, Glu393, Asp418, Asp420, Asn422, Thr424, Glu429, Asp454, Asp456, Ser458, Tyr460, Glu465, Asp489, Asp491, Asp493, Arg495, and Glu500.

This sequence belongs to the protein kinase superfamily. Ser/Thr protein kinase family. CDPK subfamily.

It localises to the membrane. It catalyses the reaction L-seryl-[protein] + ATP = O-phospho-L-seryl-[protein] + ADP + H(+). It carries out the reaction L-threonyl-[protein] + ATP = O-phospho-L-threonyl-[protein] + ADP + H(+). Its activity is regulated as follows. Activated by calcium. Autophosphorylation may play an important role in the regulation of the kinase activity. Its function is as follows. May play a role in signal transduction pathways that involve calcium as a second messenger. The chain is Calcium-dependent protein kinase 34 (CPK34) from Arabidopsis thaliana (Mouse-ear cress).